A 227-amino-acid chain; its full sequence is MSNPILEMRGITKSYNAGQANAVTVLRGVDLRIAKGEVVALVAPSGAGKSTLLHIAGLLDEADTGQVLIEGEEMRGLSDARRTAIRRSDVGFIYQFHHLLPEFNAAENIILPQLANGVSKAAAAERAAGLLSAVGIASRAAHRPGALSGGEQQRVAFCRALANAPKMLLADEPTGNLDPGTSDQVFDALMNLVRDTGLSALIATHNLALAARMDRQIRLDAGQLSDV.

Positions 6-227 constitute an ABC transporter domain; sequence LEMRGITKSY…RLDAGQLSDV (222 aa). 43 to 50 serves as a coordination point for ATP; sequence APSGAGKS.

The protein belongs to the ABC transporter superfamily. Lipoprotein translocase (TC 3.A.1.125) family. The complex is composed of two ATP-binding proteins (LolD) and two transmembrane proteins (LolC and LolE).

The protein localises to the cell inner membrane. Part of the ABC transporter complex LolCDE involved in the translocation of mature outer membrane-directed lipoproteins, from the inner membrane to the periplasmic chaperone, LolA. Responsible for the formation of the LolA-lipoprotein complex in an ATP-dependent manner. The chain is Lipoprotein-releasing system ATP-binding protein LolD from Roseobacter denitrificans (strain ATCC 33942 / OCh 114) (Erythrobacter sp. (strain OCh 114)).